A 63-amino-acid polypeptide reads, in one-letter code: Beta-toxin NaTx36 (63 aa).

The LCN-type CS-alpha/beta domain maps to 1 to 62; that stretch reads KDGYPMRSDG…VYDSATSKCR (62 aa). Disulfide bonds link Cys-11–Cys-61, Cys-15–Cys-36, Cys-22–Cys-43, and Cys-26–Cys-45.

This sequence belongs to the long (4 C-C) scorpion toxin superfamily. Sodium channel inhibitor family. Beta subfamily. As to expression, expressed by the venom gland.

It localises to the secreted. In terms of biological role, beta toxins bind sodium channels (Nav) and shift the voltage of activation towards more negative potentials thereby affecting sodium channel activation and promoting spontaneous and repetitive firing. Only when tested on grasshopper mouse channels, this toxin inhibits Nav1.8/SCN10A sodium currents in a concentration and voltage-dependent manner (IC(50)=680 nM). This toxin hyperpolarizes the voltage dependence of Nav1.8/SCN10A activation, as well as steady-state fast inactivation and slow inactivation. In contrast to most beta scorpion toxins, this toxin inhibits grasshopper mouse Nav1.8/SCN10A currents through modulation of the domain I S4 voltage sensor, and the domain II second S5-S6 extracellular pore loop. This is Beta-toxin NaTx36 from Centruroides sculpturatus (Arizona bark scorpion).